A 471-amino-acid chain; its full sequence is BPI fold-containing family B member 1 (471 aa).

The N-terminal stretch at 1-18 is a signal peptide; sequence MTNPWIVSLLLGATLVQA. N-linked (GlcNAc...) asparagine glycans are attached at residues Asn150, Asn157, Asn260, and Asn397. Cys154 and Cys197 are joined by a disulfide.

The protein belongs to the BPI/LBP/Plunc superfamily. Plunc family.

It is found in the secreted. May play a role in innate immunity in mouth, nose and lungs. Binds bacterial lipopolysaccharide (LPS) and modulates the cellular responses to LPS. The chain is BPI fold-containing family B member 1 (Bpifb1) from Rattus norvegicus (Rat).